A 163-amino-acid polypeptide reads, in one-letter code: Epithelial membrane protein 3 (163 aa).

A helical transmembrane segment spans residues 4–24; sequence LLLVVSALHILILVLLFVATL. Residues Asn46 and Asn56 are each glycosylated (N-linked (GlcNAc...) asparagine). Transmembrane regions (helical) follow at residues 66 to 86, 100 to 120, and 139 to 159; these read VQALMVLSLILCCLSFILFMF, TGLCQLCTSAAVFSGALIYAI, and FALAWVAFPLALVSGTVYIHL.

Belongs to the PMP-22/EMP/MP20 family.

The protein resides in the membrane. In terms of biological role, probably involved in cell proliferation and cell-cell interactions. This is Epithelial membrane protein 3 (Emp3) from Mus musculus (Mouse).